Consider the following 60-residue polypeptide: Large ribosomal subunit protein bL32 (60 aa).

The span at 1 to 16 shows a compositional bias: basic residues; sequence MAVPRNRHSNARKNIR. The interval 1–20 is disordered; it reads MAVPRNRHSNARKNIRRSHD.

This sequence belongs to the bacterial ribosomal protein bL32 family.

In Chlamydia pneumoniae (Chlamydophila pneumoniae), this protein is Large ribosomal subunit protein bL32 (rpmF).